A 78-amino-acid polypeptide reads, in one-letter code: Acyl carrier protein AcpP (78 aa).

Residues S2–S77 enclose the Carrier domain. S37 carries the O-(pantetheine 4'-phosphoryl)serine modification.

The protein belongs to the acyl carrier protein (ACP) family. Post-translationally, 4'-phosphopantetheine is transferred from CoA to a specific serine of apo-ACP by AcpS. This modification is essential for activity because fatty acids are bound in thioester linkage to the sulfhydryl of the prosthetic group.

The protein resides in the cytoplasm. The protein operates within lipid metabolism; fatty acid biosynthesis. Its function is as follows. Carrier of the growing fatty acid chain in fatty acid biosynthesis. The chain is Acyl carrier protein AcpP from Mesorhizobium japonicum (strain LMG 29417 / CECT 9101 / MAFF 303099) (Mesorhizobium loti (strain MAFF 303099)).